Here is a 588-residue protein sequence, read N- to C-terminus: Retrograde regulation protein 2 (588 aa).

It belongs to the GppA/Ppx family.

In terms of biological role, required for a novel path of interorganelle communication between mitochondria, peroxisomes and the nucleus, thereby maintaining a functional metabolic interaction between the tricarboxylic acid and glyoxylate cycles. In particular, required for the retrograde expression of the peroxisomal isoform of citrate synthase, CIT2. The sequence is that of Retrograde regulation protein 2 (RTG2) from Saccharomyces cerevisiae (strain ATCC 204508 / S288c) (Baker's yeast).